The sequence spans 343 residues: UDP-3-O-acylglucosamine N-acyltransferase (343 aa).

His-248 functions as the Proton acceptor in the catalytic mechanism.

The protein belongs to the transferase hexapeptide repeat family. LpxD subfamily. Homotrimer.

It carries out the reaction a UDP-3-O-[(3R)-3-hydroxyacyl]-alpha-D-glucosamine + a (3R)-hydroxyacyl-[ACP] = a UDP-2-N,3-O-bis[(3R)-3-hydroxyacyl]-alpha-D-glucosamine + holo-[ACP] + H(+). It functions in the pathway bacterial outer membrane biogenesis; LPS lipid A biosynthesis. Catalyzes the N-acylation of UDP-3-O-acylglucosamine using 3-hydroxyacyl-ACP as the acyl donor. Is involved in the biosynthesis of lipid A, a phosphorylated glycolipid that anchors the lipopolysaccharide to the outer membrane of the cell. In Microcystis aeruginosa (strain NIES-843 / IAM M-2473), this protein is UDP-3-O-acylglucosamine N-acyltransferase.